Consider the following 226-residue polypeptide: Lysosomal-associated transmembrane protein 4B (226 aa).

The next 4 helical transmembrane spans lie at 26–46 (ILLGVWYLILNAVVLLILLSA), 72–92 (MCIAIAISVLMILICAMATYG), 100–120 (WIIPFFCYQIFDFALNTLVAV), and 153–173 (CLVLIILLFISIILAFKGYLI). Residues 205-221 (PPYDDATVNSATKEPPP) are required for NEDD4 interaction.

The protein belongs to the LAPTM4/LAPTM5 transporter family. As to quaternary structure, homooligomer; upon reaching the lysosomes. Interacts with MCOLN1. Interacts with NEDD4; may play a role in the lysosomal sorting of LAPTM4B; enhances HGS association with NEDD4; mediates inhibition of EGFR degradation. Interacts with PIP5K1C; promotes SNX5 association with LAPTM4B; kinase activity of PIP5K1C is required; interaction is regulated by phosphatidylinositol 4,5-bisphosphate generated by PIP5K1C. Interacts with HGS; promotes HGS ubiquitination. Interacts with SNX5. Interacts with SLC3A2 and SLC7A5; recruits SLC3A2 and SLC7A5 to lysosomes to promote leucine uptake into these organelles and is required for mTORC1 activation. Interacts with LRRC32; decreases TGFB1 production in regulatory T cells. Interacts with BECN1; competes with EGFR for LAPTM4B binding; regulates EGFR activity. Interacts with EGFR; positively correlates with EGFR activation. In terms of processing, undergoes proteolytic cleavage following delivery to the lysosomes. Ubiquitinated by NEDD4. Strongly expressed in fetal ovary, testis, adrenal gland, liver and uterus, and weakly expressed in the spleen.

It localises to the endomembrane system. Its subcellular location is the late endosome membrane. It is found in the cell membrane. The protein localises to the cell projection. The protein resides in the lysosome membrane. It localises to the endosome membrane. Its subcellular location is the endosome. It is found in the multivesicular body membrane. The protein localises to the multivesicular body lumen. In terms of biological role, required for optimal lysosomal function. Blocks EGF-stimulated EGFR intraluminal sorting and degradation. Conversely by binding with the phosphatidylinositol 4,5-bisphosphate, regulates its PIP5K1C interaction, inhibits HGS ubiquitination and relieves LAPTM4B inhibition of EGFR degradation. Recruits SLC3A2 and SLC7A5 (the Leu transporter) to the lysosome, promoting entry of leucine and other essential amino acid (EAA) into the lysosome, stimulating activation of proton-transporting vacuolar (V)-ATPase protein pump (V-ATPase) and hence mTORC1 activation. Plays a role as negative regulator of TGFB1 production in regulatory T cells. Binds ceramide and facilitates its exit from late endosome in order to control cell death pathways. The sequence is that of Lysosomal-associated transmembrane protein 4B from Bos taurus (Bovine).